Here is a 197-residue protein sequence, read N- to C-terminus: HTH-type transcriptional regulator BetI (197 aa).

The HTH tetR-type domain maps to 8–68; sequence PIRRSQLIHA…ATMRHLLSAL (61 aa). The segment at residues 31-50 is a DNA-binding region (H-T-H motif); it reads SIALIARLAGVSNGIISHYF.

Its pathway is amine and polyamine biosynthesis; betaine biosynthesis via choline pathway [regulation]. Repressor involved in the biosynthesis of the osmoprotectant glycine betaine. It represses transcription of the choline transporter BetT and the genes of BetAB involved in the synthesis of glycine betaine. The sequence is that of HTH-type transcriptional regulator BetI from Pseudomonas aeruginosa (strain LESB58).